The following is a 339-amino-acid chain: Ketol-acid reductoisomerase (NADP(+)) (339 aa).

The region spanning Met1–Thr182 is the KARI N-terminal Rossmann domain. Residues Tyr24–Gln27, Arg48, Ser51, Ser53, and Asp83–Gln86 contribute to the NADP(+) site. His108 is a catalytic residue. Gly134 contacts NADP(+). The 146-residue stretch at Thr183–Ile328 folds into the KARI C-terminal knotted domain. Mg(2+)-binding residues include Asp191, Glu195, Glu227, and Glu231. Ser252 lines the substrate pocket.

The protein belongs to the ketol-acid reductoisomerase family. Requires Mg(2+) as cofactor.

It carries out the reaction (2R)-2,3-dihydroxy-3-methylbutanoate + NADP(+) = (2S)-2-acetolactate + NADPH + H(+). It catalyses the reaction (2R,3R)-2,3-dihydroxy-3-methylpentanoate + NADP(+) = (S)-2-ethyl-2-hydroxy-3-oxobutanoate + NADPH + H(+). The protein operates within amino-acid biosynthesis; L-isoleucine biosynthesis; L-isoleucine from 2-oxobutanoate: step 2/4. It participates in amino-acid biosynthesis; L-valine biosynthesis; L-valine from pyruvate: step 2/4. Its function is as follows. Involved in the biosynthesis of branched-chain amino acids (BCAA). Catalyzes an alkyl-migration followed by a ketol-acid reduction of (S)-2-acetolactate (S2AL) to yield (R)-2,3-dihydroxy-isovalerate. In the isomerase reaction, S2AL is rearranged via a Mg-dependent methyl migration to produce 3-hydroxy-3-methyl-2-ketobutyrate (HMKB). In the reductase reaction, this 2-ketoacid undergoes a metal-dependent reduction by NADPH to yield (R)-2,3-dihydroxy-isovalerate. This chain is Ketol-acid reductoisomerase (NADP(+)), found in Rhodopseudomonas palustris (strain ATCC BAA-98 / CGA009).